Reading from the N-terminus, the 364-residue chain is Methylthioribose-1-phosphate isomerase (364 aa).

D254 (proton donor) is an active-site residue.

The protein belongs to the eIF-2B alpha/beta/delta subunits family. MtnA subfamily.

The protein localises to the cytoplasm. The protein resides in the nucleus. The enzyme catalyses 5-(methylsulfanyl)-alpha-D-ribose 1-phosphate = 5-(methylsulfanyl)-D-ribulose 1-phosphate. It functions in the pathway amino-acid biosynthesis; L-methionine biosynthesis via salvage pathway; L-methionine from S-methyl-5-thio-alpha-D-ribose 1-phosphate: step 1/6. Catalyzes the interconversion of methylthioribose-1-phosphate (MTR-1-P) into methylthioribulose-1-phosphate (MTRu-1-P). In Drosophila melanogaster (Fruit fly), this protein is Methylthioribose-1-phosphate isomerase.